We begin with the raw amino-acid sequence, 576 residues long: Arginine--tRNA ligase (576 aa).

Positions 126-136 match the 'HIGH' region motif; it reads ANPTGPMHIGH.

It belongs to the class-I aminoacyl-tRNA synthetase family. As to quaternary structure, monomer.

It is found in the cytoplasm. The catalysed reaction is tRNA(Arg) + L-arginine + ATP = L-arginyl-tRNA(Arg) + AMP + diphosphate. The polypeptide is Arginine--tRNA ligase (Rickettsia felis (strain ATCC VR-1525 / URRWXCal2) (Rickettsia azadi)).